A 185-amino-acid polypeptide reads, in one-letter code: Ribosome-recycling factor (185 aa).

It belongs to the RRF family.

It is found in the cytoplasm. Responsible for the release of ribosomes from messenger RNA at the termination of protein biosynthesis. May increase the efficiency of translation by recycling ribosomes from one round of translation to another. This chain is Ribosome-recycling factor, found in Sulfurovum sp. (strain NBC37-1).